The following is a 381-amino-acid chain: Putative F-box/kelch-repeat protein At1g60570 (381 aa).

Residues 19–65 (PTLIPSLPEELILSILARVSRLSYRSLSLVCKRFHSLLTSGEIYRFR) enclose the F-box domain. 4 Kelch repeats span residues 126–169 (KIYK…LIDG), 171–218 (IYVT…ERTN), 220–266 (LLVD…VIEN), and 269–314 (YDFF…DYGG).

The sequence is that of Putative F-box/kelch-repeat protein At1g60570 from Arabidopsis thaliana (Mouse-ear cress).